The primary structure comprises 359 residues: DNA-directed RNA polymerase RPB3-11 homolog (359 aa).

In the N-terminal section; belongs to the archaeal RpoD/eukaryotic RPB3 RNA polymerase subunit family. This sequence in the C-terminal section; belongs to the archaeal RpoL/eukaryotic RPB11/RPC19 RNA polymerase subunit family. In terms of assembly, part of the viral DNA-directed RNA polymerase that consists of 8 polII-like subunits (RPB1, RPB2, RPB3, RPB5, RPB6, RPB7, RPB9, RPB10), a capping enzyme and a termination factor.

Its subcellular location is the host cytoplasm. It localises to the virion. Functionally, component of the DNA-directed RNA polymerase (RNAP) that catalyzes the transcription in the cytoplasm of viral DNA into RNA using the four ribonucleoside triphosphates as substrates. This Ornithodoros (relapsing fever ticks) protein is DNA-directed RNA polymerase RPB3-11 homolog.